Reading from the N-terminus, the 521-residue chain is Glutamyl-tRNA(Gln) amidotransferase subunit A, mitochondrial (521 aa).

Residues Lys61 and Ser139 each act as charge relay system in the active site. The active-site Acyl-ester intermediate is Ser163.

Belongs to the amidase family. GatA subfamily. In terms of assembly, subunit of the heterotrimeric GatCAB amidotransferase (AdT) complex, composed of A, B and C subunits.

It is found in the mitochondrion. It carries out the reaction L-glutamyl-tRNA(Gln) + L-glutamine + ATP + H2O = L-glutaminyl-tRNA(Gln) + L-glutamate + ADP + phosphate + H(+). Its function is as follows. Allows the formation of correctly charged Gln-tRNA(Gln) through the transamidation of misacylated Glu-tRNA(Gln) in the mitochondria. The reaction takes place in the presence of glutamine and ATP through an activated gamma-phospho-Glu-tRNA(Gln). In Ajellomyces capsulatus (strain G186AR / H82 / ATCC MYA-2454 / RMSCC 2432) (Darling's disease fungus), this protein is Glutamyl-tRNA(Gln) amidotransferase subunit A, mitochondrial.